We begin with the raw amino-acid sequence, 206 residues long: Peptidyl-tRNA hydrolase (206 aa).

Residue Y19 participates in tRNA binding. H24 serves as the catalytic Proton acceptor. The tRNA site is built by Y70, N72, and N118.

This sequence belongs to the PTH family. Monomer.

It localises to the cytoplasm. The catalysed reaction is an N-acyl-L-alpha-aminoacyl-tRNA + H2O = an N-acyl-L-amino acid + a tRNA + H(+). Functionally, hydrolyzes ribosome-free peptidyl-tRNAs (with 1 or more amino acids incorporated), which drop off the ribosome during protein synthesis, or as a result of ribosome stalling. In terms of biological role, catalyzes the release of premature peptidyl moieties from peptidyl-tRNA molecules trapped in stalled 50S ribosomal subunits, and thus maintains levels of free tRNAs and 50S ribosomes. In Prochlorococcus marinus (strain MIT 9303), this protein is Peptidyl-tRNA hydrolase.